The sequence spans 347 residues: UPF0284 protein M1627_0030 (347 aa).

Belongs to the UPF0284 family.

This chain is UPF0284 protein M1627_0030, found in Saccharolobus islandicus (strain M.16.27) (Sulfolobus islandicus).